We begin with the raw amino-acid sequence, 64 residues long: Cytochrome c oxidase subunit 2 (64 aa).

Residues 1-14 are Mitochondrial intermembrane-facing; it reads MAHPSQLGFQDAAS. The helical transmembrane segment at 15–45 threads the bilayer; sequence PVMEELXHFHDHTLMIVFLISTLVXYIIVAM. Topologically, residues 46 to 64 are mitochondrial matrix; the sequence is VSTKLTNKYVLDSQEIEIV.

The protein belongs to the cytochrome c oxidase subunit 2 family. Component of the cytochrome c oxidase (complex IV, CIV), a multisubunit enzyme composed of 14 subunits. The complex is composed of a catalytic core of 3 subunits MT-CO1, MT-CO2 and MT-CO3, encoded in the mitochondrial DNA, and 11 supernumerary subunits COX4I, COX5A, COX5B, COX6A, COX6B, COX6C, COX7A, COX7B, COX7C, COX8 and NDUFA4, which are encoded in the nuclear genome. The complex exists as a monomer or a dimer and forms supercomplexes (SCs) in the inner mitochondrial membrane with NADH-ubiquinone oxidoreductase (complex I, CI) and ubiquinol-cytochrome c oxidoreductase (cytochrome b-c1 complex, complex III, CIII), resulting in different assemblies (supercomplex SCI(1)III(2)IV(1) and megacomplex MCI(2)III(2)IV(2)). Found in a complex with TMEM177, COA6, COX18, COX20, SCO1 and SCO2. Interacts with TMEM177 in a COX20-dependent manner. Interacts with COX20. Interacts with COX16. Cu cation is required as a cofactor.

The protein resides in the mitochondrion inner membrane. It catalyses the reaction 4 Fe(II)-[cytochrome c] + O2 + 8 H(+)(in) = 4 Fe(III)-[cytochrome c] + 2 H2O + 4 H(+)(out). Its function is as follows. Component of the cytochrome c oxidase, the last enzyme in the mitochondrial electron transport chain which drives oxidative phosphorylation. The respiratory chain contains 3 multisubunit complexes succinate dehydrogenase (complex II, CII), ubiquinol-cytochrome c oxidoreductase (cytochrome b-c1 complex, complex III, CIII) and cytochrome c oxidase (complex IV, CIV), that cooperate to transfer electrons derived from NADH and succinate to molecular oxygen, creating an electrochemical gradient over the inner membrane that drives transmembrane transport and the ATP synthase. Cytochrome c oxidase is the component of the respiratory chain that catalyzes the reduction of oxygen to water. Electrons originating from reduced cytochrome c in the intermembrane space (IMS) are transferred via the dinuclear copper A center (CU(A)) of subunit 2 and heme A of subunit 1 to the active site in subunit 1, a binuclear center (BNC) formed by heme A3 and copper B (CU(B)). The BNC reduces molecular oxygen to 2 water molecules using 4 electrons from cytochrome c in the IMS and 4 protons from the mitochondrial matrix. The chain is Cytochrome c oxidase subunit 2 (mt-co2) from Scaphirhynchus platorynchus (Shovelnose sturgeon).